Consider the following 305-residue polypeptide: Acetyl-coenzyme A carboxylase carboxyl transferase subunit beta (305 aa).

The 270-residue stretch at 27–296 folds into the CoA carboxyltransferase N-terminal domain; the sequence is LWVKCSSCRE…SPAKAELAGR (270 aa). 4 residues coordinate Zn(2+): cysteine 31, cysteine 34, cysteine 50, and cysteine 53. A C4-type zinc finger spans residues 31 to 53; that stretch reads CSSCRELIYKKQLNDNLKVCPKC.

It belongs to the AccD/PCCB family. As to quaternary structure, acetyl-CoA carboxylase is a heterohexamer composed of biotin carboxyl carrier protein (AccB), biotin carboxylase (AccC) and two subunits each of ACCase subunit alpha (AccA) and ACCase subunit beta (AccD). It depends on Zn(2+) as a cofactor.

The protein localises to the cytoplasm. It catalyses the reaction N(6)-carboxybiotinyl-L-lysyl-[protein] + acetyl-CoA = N(6)-biotinyl-L-lysyl-[protein] + malonyl-CoA. It functions in the pathway lipid metabolism; malonyl-CoA biosynthesis; malonyl-CoA from acetyl-CoA: step 1/1. In terms of biological role, component of the acetyl coenzyme A carboxylase (ACC) complex. Biotin carboxylase (BC) catalyzes the carboxylation of biotin on its carrier protein (BCCP) and then the CO(2) group is transferred by the transcarboxylase to acetyl-CoA to form malonyl-CoA. The protein is Acetyl-coenzyme A carboxylase carboxyl transferase subunit beta of Chloroflexus aurantiacus (strain ATCC 29366 / DSM 635 / J-10-fl).